We begin with the raw amino-acid sequence, 218 residues long: 25.3 kDa vesicle transport protein SEC22-1 (218 aa).

At M1–A192 the chain is on the cytoplasmic side. In terms of domain architecture, Longin spans L6 to I120. In terms of domain architecture, v-SNARE coiled-coil homology spans N135–R195. The helical; Anchor for type IV membrane protein transmembrane segment at L193 to V213 threads the bilayer. Residues K214–W218 are Vesicular-facing.

This sequence belongs to the synaptobrevin family. In terms of assembly, interacts with SEC24A. In terms of tissue distribution, mainly expressed in flowers and siliques, to a lower extent in seedlings, and barely in roots and leaves.

It localises to the golgi apparatus membrane. Its subcellular location is the endoplasmic reticulum membrane. Its function is as follows. V-SNARE involved in vesicle trafficking from the ER to the Golgi complex and required for early secretion. Involved in endoplasmic reticulum (ER) biogenesis and functions as well as for Golgi-stack integrity. Essential for gametophytes development. Involved in cesium Cs(+) accumulation, a non-essential cation. This chain is 25.3 kDa vesicle transport protein SEC22-1, found in Arabidopsis thaliana (Mouse-ear cress).